The sequence spans 298 residues: MLYLIGLGLSYKSDITVRGLEAVKNCTRVYLEHYTSILMAASKEELEEFYGKEVILADRELVESGSADILRDADKENVAFLVVGDPFGATTHTDLVLRAKKDKIPVEVIHNASVMNAVGSCGLQLYNFGQTISMVFFTDSWRPDSWYDKVMENRKIGLHTLVLLDIKVKEQSLENMARGRLIYEPPRYMSIAQCCQQLLEIEELRAEKAYTADTPVVGISRLGSPTQSFKAGTIKELAEYDAGEPLHSLVILGRQSHELELEYLLEFTDNKEKFKNDVIADQEYFKPAPWVPPVEEED.

S-adenosyl-L-methionine contacts are provided by residues L9, D85, G88, 113-114 (SV), L164, L222, and H247.

It belongs to the diphthine synthase family.

The protein resides in the cytoplasm. It catalyses the reaction 2-[(3S)-amino-3-carboxypropyl]-L-histidyl-[translation elongation factor 2] + 4 S-adenosyl-L-methionine = diphthine methyl ester-[translation elongation factor 2] + 4 S-adenosyl-L-homocysteine + 3 H(+). Its pathway is protein modification; peptidyl-diphthamide biosynthesis. Its function is as follows. S-adenosyl-L-methionine-dependent methyltransferase that catalyzes four methylations of the modified target histidine residue in translation elongation factor 2 (EF-2), to form an intermediate called diphthine methyl ester. The four successive methylation reactions represent the second step of diphthamide biosynthesis. The chain is Diphthine methyl ester synthase (DPH5) from Candida glabrata (strain ATCC 2001 / BCRC 20586 / JCM 3761 / NBRC 0622 / NRRL Y-65 / CBS 138) (Yeast).